The chain runs to 279 residues: Tryptophan 2,3-dioxygenase (279 aa).

Residues 48 to 52 (FIVIH), tyrosine 110, and arginine 114 contribute to the substrate site. Histidine 237 lines the heme pocket. Threonine 251 contacts substrate.

This sequence belongs to the tryptophan 2,3-dioxygenase family. In terms of assembly, homotetramer. The cofactor is heme.

It carries out the reaction L-tryptophan + O2 = N-formyl-L-kynurenine. It functions in the pathway amino-acid degradation; L-tryptophan degradation via kynurenine pathway; L-kynurenine from L-tryptophan: step 1/2. Heme-dependent dioxygenase that catalyzes the oxidative cleavage of the L-tryptophan (L-Trp) pyrrole ring and converts L-tryptophan to N-formyl-L-kynurenine. Catalyzes the oxidative cleavage of the indole moiety. This is Tryptophan 2,3-dioxygenase from Bacillus thuringiensis (strain Al Hakam).